Here is a 349-residue protein sequence, read N- to C-terminus: Thioredoxin-related transmembrane protein 4 (349 aa).

The first 23 residues, 1–23, serve as a signal peptide directing secretion; the sequence is MAGGRCGPQLTALLAAWIAAVAA. The Thioredoxin domain maps to 30-137; sequence AALPPEQSRV…FEDLQNYILE (108 aa). Catalysis depends on nucleophile residues Cys-64 and Cys-67. Cys-64 and Cys-67 are joined by a disulfide. The helical transmembrane segment at 190–210 threads the bilayer; sequence VFFVIATLVFGLFMGLVLVVI. Basic and acidic residues predominate over residues 225–240; the sequence is RSEQNRRSEEAHRAEQ. The tract at residues 225–349 is disordered; that stretch reads RSEQNRRSEE…RKSQHADKGL (125 aa). Acidic residues-rich tracts occupy residues 242–284 and 312–321; these read QDAE…EEDN and VEPEEAEEGI. A phosphoserine mark is found at Ser-251 and Ser-259. Positions 335-349 are enriched in basic and acidic residues; that stretch reads DSLRQRKSQHADKGL.

It is found in the nucleus inner membrane. Its subcellular location is the endoplasmic reticulum membrane. This is Thioredoxin-related transmembrane protein 4 (TMX4) from Homo sapiens (Human).